The sequence spans 298 residues: Probable endonuclease 4 (298 aa).

Zn(2+) contacts are provided by histidine 69, histidine 111, glutamate 146, aspartate 180, histidine 183, histidine 215, aspartate 228, histidine 230, and glutamate 260.

Belongs to the AP endonuclease 2 family. Zn(2+) serves as cofactor.

It carries out the reaction Endonucleolytic cleavage to 5'-phosphooligonucleotide end-products.. Functionally, endonuclease IV plays a role in DNA repair. It cleaves phosphodiester bonds at apurinic or apyrimidinic (AP) sites, generating a 3'-hydroxyl group and a 5'-terminal sugar phosphate. In Bacillus cytotoxicus (strain DSM 22905 / CIP 110041 / 391-98 / NVH 391-98), this protein is Probable endonuclease 4.